A 52-amino-acid chain; its full sequence is Metallothionein-2 (52 aa).

Repeats lie at residues 43-47 (QTCKC) and 48-52 (QTCKC).

The protein belongs to the metallothionein superfamily. Type 10 family.

In terms of biological role, the metallothioneins are involved in the cellular sequestration of toxic metal ions. The polypeptide is Metallothionein-2 (MT-II) (Candida glabrata (strain ATCC 2001 / BCRC 20586 / JCM 3761 / NBRC 0622 / NRRL Y-65 / CBS 138) (Yeast)).